The chain runs to 162 residues: MKHRVVGRRLDRTTEHRTAMFKNMVTSLFRHERIVTTTPKAKELKRFADKVITQAKRGTPHARRLAHRNVRDVEVLNKLFDTLAERFKARPGGYTRIVRVGRRAGDNAEMSVIELVDRAPAAAPEAEEKGEKKAAGKAEKAPKAAKAPKAEKKPAKKAAKAE.

The segment at arginine 118–glutamate 162 is disordered. Residues alanine 126–glutamate 162 are compositionally biased toward basic and acidic residues.

It belongs to the bacterial ribosomal protein bL17 family. Part of the 50S ribosomal subunit. Contacts protein L32.

The polypeptide is Large ribosomal subunit protein bL17 (Anaeromyxobacter dehalogenans (strain 2CP-C)).